A 332-amino-acid polypeptide reads, in one-letter code: MLVLGVESTAHTISLGLVKDGDVLGQVGKTYVPPSGLGIHPREAADHHSQMAPQLLSHLLYRHGVRLSDVDVVAYAAGPGLGPALRVGAVLARAIAIKLGVPIVPVHHGIAHIEIARYATKSCDPLVVLISGGHTVIAGYSDRRYRIFGETLDVAIGNAIDMFAREAGLGFPGVPAVERCGESADRLVEFPMPIVGQDMSYAGLTTYALKLLKEGVPLSVICKSLVEAAYYMLAEVTERALAFTRKSELVVAGGVARSRRLREILSQVGAYHGAEVKVVPDEYAGDNGAMIALTGYYAYKRGVYTTPEESFVRQRWRLDAVDVPWFWDLCNR.

Residues His108 and His112 each coordinate Fe cation. Substrate-binding positions include 129–133 (LISGG), Asp161, Glu178, and Ser258. Asp286 contributes to the Fe cation binding site.

Belongs to the KAE1 / TsaD family. Requires Fe(2+) as cofactor.

Its subcellular location is the cytoplasm. It carries out the reaction L-threonylcarbamoyladenylate + adenosine(37) in tRNA = N(6)-L-threonylcarbamoyladenosine(37) in tRNA + AMP + H(+). Required for the formation of a threonylcarbamoyl group on adenosine at position 37 (t(6)A37) in tRNAs that read codons beginning with adenine. Is probably involved in the transfer of the threonylcarbamoyl moiety of threonylcarbamoyl-AMP (TC-AMP) to the N6 group of A37. In Pyrobaculum arsenaticum (strain DSM 13514 / JCM 11321 / PZ6), this protein is tRNA N6-adenosine threonylcarbamoyltransferase.